Consider the following 100-residue polypeptide: Urease subunit gamma (100 aa).

The protein belongs to the urease gamma subunit family. Heterotrimer of UreA (gamma), UreB (beta) and UreC (alpha) subunits. Three heterotrimers associate to form the active enzyme.

The protein resides in the cytoplasm. The catalysed reaction is urea + 2 H2O + H(+) = hydrogencarbonate + 2 NH4(+). It functions in the pathway nitrogen metabolism; urea degradation; CO(2) and NH(3) from urea (urease route): step 1/1. The polypeptide is Urease subunit gamma (Proteus hauseri).